Here is a 78-residue protein sequence, read N- to C-terminus: Large ribosomal subunit protein bL28 (78 aa).

Positions 1 to 23 (MSRVCQVSGKRVQTGNNVSHANN) are disordered. Positions 11–22 (RVQTGNNVSHAN) are enriched in polar residues.

The protein belongs to the bacterial ribosomal protein bL28 family.

The chain is Large ribosomal subunit protein bL28 from Xanthomonas campestris pv. campestris (strain 8004).